A 301-amino-acid chain; its full sequence is Probable alpha-L-glutamate ligase (301 aa).

In terms of domain architecture, ATP-grasp spans L104–E287. ATP is bound by residues K141, E178 to Y179, D187, and R211 to N213. Mg(2+)-binding residues include D248, E260, and N262. The Mn(2+) site is built by D248, E260, and N262.

The protein belongs to the RimK family. Requires Mg(2+) as cofactor. It depends on Mn(2+) as a cofactor.

This chain is Probable alpha-L-glutamate ligase, found in Pseudomonas putida (strain W619).